The sequence spans 173 residues: 5-hydroxymethyl-dUMP N-hydrolase (173 aa).

Ala-2 carries the post-translational modification N-acetylalanine. Position 16 (Gly-16) interacts with 5-hydroxymethyl-dUMP. The residue at position 17 (Ser-17) is a Phosphoserine. 6 residues coordinate 5-hydroxymethyl-dUMP: Ile-18, Arg-19, Gly-20, Ser-87, Gly-89, and Glu-93. Ser-87 is modified (phosphoserine). Phosphoserine is present on residues Ser-112, Ser-117, Ser-127, and Ser-158. Position 117 (Ser-117) interacts with 5-hydroxymethyl-dUMP.

This sequence belongs to the 2'-deoxynucleoside 5'-phosphate N-hydrolase 1 family. As to quaternary structure, monomer and homodimer.

Its subcellular location is the cytoplasm. The protein resides in the nucleus. It carries out the reaction 5-hydroxymethyl-dUMP + H2O = 5-hydroxymethyluracil + 2-deoxy-D-ribose 5-phosphate. In terms of biological role, part of a nucleotide salvage pathway that eliminates epigenetically modified 5-hydroxymethyl-dCMP (hmdCMP) in a two-step process entailing deamination to cytotoxic 5-hydroxymethyl-dUMP (hmdUMP), followed by its hydrolysis into 5-hydroxymethyluracil (hmU) and 2-deoxy-D-ribose 5-phosphate (deoxyribosephosphate). Catalyzes the second step in that pathway, the hydrolysis of the N-glycosidic bond in hmdUMP, degrading this cytotoxic nucleotide to avoid its genomic integration. The sequence is that of 5-hydroxymethyl-dUMP N-hydrolase from Mus musculus (Mouse).